The primary structure comprises 307 residues: Putative flagellar export/assembly protein LafU (307 aa).

Residues 32 to 54 traverse the membrane as a helical segment; the sequence is AWKVAFADFTLAMMALFMTLWIV. Residues 87–108 are disordered; the sequence is SPSHPPKPATVAAPEETEKKAR. Residues 154-272 enclose the OmpA-like domain; it reads LRVLIKDDQN…RIEIMVLTKS (119 aa).

This sequence belongs to the MotB family.

The protein resides in the cell inner membrane. In terms of biological role, part of the flagellar gene cluster Flag-2. However, the Flag-2 flagellar system could be inactive in strain 042 due to a frameshift in lfgC. This Escherichia coli O44:H18 (strain 042 / EAEC) protein is Putative flagellar export/assembly protein LafU.